Reading from the N-terminus, the 571-residue chain is Cyclic di-GMP phosphodiesterase TpdA (571 aa).

A run of 3 helical transmembrane segments spans residues 155–175 (IAWVLLVTTAIFFSVCYYAIN), 321–341 (VYYISGPLKSIILLSLFFLVI), and 395–415 (TLISNGLLLIHTILVIRAIYA). An EAL domain is found at 344–571 (HRSLQAFITY…HQGYFYPLHF (228 aa)).

Its subcellular location is the cell inner membrane. The catalysed reaction is 3',3'-c-di-GMP + H2O = 5'-phosphoguanylyl(3'-&gt;5')guanosine + H(+). Its function is as follows. Cyclic di-GMP phosphodiesterase that plays an important role in modulating the global c-di-GMP pool. Its ability to alter the c-di-GMP pool has an effect on swimming motility, swarming motility and biofilm formation, multicellular behaviors that are important for the survival and dissemination of this environmental pathogen. Exhibits a dual function, namely, c-di-GMP degradation and modulation of its own expression. The sequence is that of Cyclic di-GMP phosphodiesterase TpdA from Vibrio parahaemolyticus serotype O3:K6 (strain RIMD 2210633).